Reading from the N-terminus, the 1133-residue chain is Trafficking protein particle complex subunit 11 (1133 aa).

Residue Lys245 is modified to N6-acetyllysine.

The protein belongs to the TRAPPC11 family. Component of the multisubunit TRAPP (transport protein particle) complex, which includes at least TRAPPC2, TRAPPC2L, TRAPPC3, TRAPPC3L, TRAPPC4, TRAPPC5, TRAPPC8, TRAPPC9, TRAPPC10, TRAPPC11 and TRAPPC12.

It localises to the golgi apparatus. It is found in the cis-Golgi network. Functionally, involved in endoplasmic reticulum to Golgi apparatus trafficking at a very early stage. The polypeptide is Trafficking protein particle complex subunit 11 (TRAPPC11) (Bos taurus (Bovine)).